We begin with the raw amino-acid sequence, 394 residues long: ATP phosphoribosyltransferase regulatory subunit (394 aa).

This sequence belongs to the class-II aminoacyl-tRNA synthetase family. HisZ subfamily. In terms of assembly, heteromultimer composed of HisG and HisZ subunits.

It localises to the cytoplasm. The protein operates within amino-acid biosynthesis; L-histidine biosynthesis; L-histidine from 5-phospho-alpha-D-ribose 1-diphosphate: step 1/9. Functionally, required for the first step of histidine biosynthesis. May allow the feedback regulation of ATP phosphoribosyltransferase activity by histidine. The polypeptide is ATP phosphoribosyltransferase regulatory subunit (Pseudomonas paraeruginosa (strain DSM 24068 / PA7) (Pseudomonas aeruginosa (strain PA7))).